A 24-amino-acid chain; its full sequence is SM-11044-binding protein (24 aa).

May mediate relaxation of depolarized colon tonus. It binds iodocyanopindolol and SM-11044. The protein is SM-11044-binding protein of Rattus norvegicus (Rat).